The primary structure comprises 330 residues: Protoheme IX farnesyltransferase (330 aa).

The next 9 helical transmembrane spans lie at 33–53 (VMTL…VDAD), 54–74 (PFLA…AGAL), 101–121 (VSNA…LMAL), 126–146 (LAAG…TMIL), 154–174 (IVIG…AATG), 180–200 (AVIL…ALAL), 227–247 (ILLY…TGLG), 250–270 (VYGA…WRIF), and 308–328 (VLFA…IPGV).

It belongs to the UbiA prenyltransferase family. Protoheme IX farnesyltransferase subfamily. In terms of assembly, interacts with CtaA.

The protein localises to the cell inner membrane. It catalyses the reaction heme b + (2E,6E)-farnesyl diphosphate + H2O = Fe(II)-heme o + diphosphate. The protein operates within porphyrin-containing compound metabolism; heme O biosynthesis; heme O from protoheme: step 1/1. Converts heme B (protoheme IX) to heme O by substitution of the vinyl group on carbon 2 of heme B porphyrin ring with a hydroxyethyl farnesyl side group. This is Protoheme IX farnesyltransferase from Maricaulis maris (strain MCS10) (Caulobacter maris).